The chain runs to 285 residues: Acetyl-coenzyme A carboxylase carboxyl transferase subunit beta (285 aa).

Positions 29–285 (IMTKCPKCKK…ILKIHQEVSN (257 aa)) constitute a CoA carboxyltransferase N-terminal domain. Zn(2+) contacts are provided by C33, C36, C52, and C55. The segment at 33-55 (CPKCKKIMYTKELNENLNVCFNC) adopts a C4-type zinc-finger fold.

Belongs to the AccD/PCCB family. In terms of assembly, acetyl-CoA carboxylase is a heterohexamer composed of biotin carboxyl carrier protein (AccB), biotin carboxylase (AccC) and two subunits each of ACCase subunit alpha (AccA) and ACCase subunit beta (AccD). Zn(2+) serves as cofactor.

It localises to the cytoplasm. It carries out the reaction N(6)-carboxybiotinyl-L-lysyl-[protein] + acetyl-CoA = N(6)-biotinyl-L-lysyl-[protein] + malonyl-CoA. The protein operates within lipid metabolism; malonyl-CoA biosynthesis; malonyl-CoA from acetyl-CoA: step 1/1. Component of the acetyl coenzyme A carboxylase (ACC) complex. Biotin carboxylase (BC) catalyzes the carboxylation of biotin on its carrier protein (BCCP) and then the CO(2) group is transferred by the transcarboxylase to acetyl-CoA to form malonyl-CoA. The protein is Acetyl-coenzyme A carboxylase carboxyl transferase subunit beta of Staphylococcus epidermidis (strain ATCC 12228 / FDA PCI 1200).